Consider the following 85-residue polypeptide: Large ribosomal subunit protein bL27 (85 aa).

The interval 1–22 (MAKTKAGGSTRNGRDSKGRRLG) is disordered.

The protein belongs to the bacterial ribosomal protein bL27 family.

In Mycoplasmopsis pulmonis (strain UAB CTIP) (Mycoplasma pulmonis), this protein is Large ribosomal subunit protein bL27.